A 786-amino-acid polypeptide reads, in one-letter code: Endonuclease MutS2 (786 aa).

Position 335 to 342 (335 to 342 (GPNTGGKT)) interacts with ATP. Residues 711–786 (LDLRGERFEN…GLGVTVVELK (76 aa)) enclose the Smr domain.

It belongs to the DNA mismatch repair MutS family. MutS2 subfamily. Homodimer. Binds to stalled ribosomes, contacting rRNA.

Its function is as follows. Endonuclease that is involved in the suppression of homologous recombination and thus may have a key role in the control of bacterial genetic diversity. Acts as a ribosome collision sensor, splitting the ribosome into its 2 subunits. Detects stalled/collided 70S ribosomes which it binds and splits by an ATP-hydrolysis driven conformational change. Acts upstream of the ribosome quality control system (RQC), a ribosome-associated complex that mediates the extraction of incompletely synthesized nascent chains from stalled ribosomes and their subsequent degradation. Probably generates substrates for RQC. In Bacillus anthracis (strain A0248), this protein is Endonuclease MutS2.